We begin with the raw amino-acid sequence, 626 residues long: Glyco-Gag protein (626 aa).

Over 1 to 66 (LGDVPGTSGA…SVWNRSRAAR (66 aa)) the chain is Cytoplasmic. Residues 67-86 (LVCCSIVLCCLCLTVFLYLS) traverse the membrane as a helical segment. At 87-626 (ENMGQAVTTP…PQASLLTLDD (540 aa)) the chain is on the extracellular side. The N-linked (GlcNAc...) asparagine; by host glycan is linked to Asn-113. Composition is skewed to pro residues over residues 198–212 (PPSAPSLPPEPPLST) and 249–261 (DPPPYRDPGPPSP). 2 disordered regions span residues 198 to 306 (PPSA…FPLR) and 522 to 626 (RETP…TLDD). 2 stretches are compositionally biased toward basic and acidic residues: residues 522–554 (RETPEEREERIRRETEEKEERRRAEDVQREKER) and 574–607 (RQDRQGGERRRPQLDHDQCAYCKEKGHWARDCPK). Positions 526–566 (EEREERIRRETEEKEERRRAEDVQREKERDRRRHREMSKLL) form a coiled coil. The CCHC-type zinc-finger motif lies at 590–607 (DQCAYCKEKGHWARDCPK).

Post-translationally, glycosylated by host. In terms of processing, cleaved by host near the middle of the molecule, releasing the c-terminal half containing capsid and nucleoprotein domains op GAG.

It is found in the host cell membrane. Its function is as follows. Plays a role in viral particle release. Presumably acts by facilitating the fission of the virion bud at the cell surface. May prevent the antiviral activity of murine APOBEC3. In Mus musculus (Mouse), this protein is Glyco-Gag protein.